The chain runs to 289 residues: MGKLIVVGSCGVLVCVLASLYTIGNLLNEIEELQVEFQDGMVEFRAITQDTWARMVSKHINPTGHTNAPPTFETLFGARTARQAGFEQCNCGPKSEGCPAGPPGPPGEGGQKGNPGHDGDDGKPGAPGVIVAITHDIPGGCIKCPPGRPGPKGPSGLPGSAGPAGGNGRRGPPGPVGGPGEQGPQGDAGRPGAAGRPGPAGPRGEPGTEYKPGQPGRPGPQGPRGETGPAGNPGAPGNDGEAGKNGNAGRPGPPGHPGKNGVPGQKGEDAAPGPDAGYCPCPSRAAYKA.

Positions 1 to 18 (MGKLIVVGSCGVLVCVLA) are cleaved as a signal peptide. Residues 95 to 289 (SEGCPAGPPG…PCPSRAAYKA (195 aa)) form a disordered region. Triple-helical region regions lie at residues 101–130 (GPPG…PGVI) and 147–269 (GRPG…KGED). A compositionally biased stretch (gly residues) spans 162–183 (GPAGGNGRRGPPGPVGGPGEQG). 2 stretches are compositionally biased toward low complexity: residues 184-207 (PQGD…GEPG) and 223-239 (PRGE…PGND).

Belongs to the cuticular collagen family. As to quaternary structure, collagen polypeptide chains are complexed within the cuticle by disulfide bonds and other types of covalent cross-links.

Functionally, nematode cuticles are composed largely of collagen-like proteins. The cuticle functions both as an exoskeleton and as a barrier to protect the worm from its environment. This chain is Cuticle collagen 19 (col-19), found in Caenorhabditis elegans.